We begin with the raw amino-acid sequence, 297 residues long: UTP--glucose-1-phosphate uridylyltransferase (297 aa).

The protein belongs to the UDPGP type 2 family.

It catalyses the reaction alpha-D-glucose 1-phosphate + UTP + H(+) = UDP-alpha-D-glucose + diphosphate. It participates in carbohydrate metabolism; nucleotide-sugar metabolism. The protein operates within bacterial outer membrane biogenesis; lipopolysaccharide biosynthesis. This chain is UTP--glucose-1-phosphate uridylyltransferase (galF), found in Escherichia coli O157:H7.